We begin with the raw amino-acid sequence, 86 residues long: Small ribosomal subunit protein bS20 (86 aa).

Residues 1–25 (MANSASSRKRARQAVKRNKHNSQIR) are disordered. Residues 7–25 (SRKRARQAVKRNKHNSQIR) are compositionally biased toward basic residues.

It belongs to the bacterial ribosomal protein bS20 family.

Its function is as follows. Binds directly to 16S ribosomal RNA. The protein is Small ribosomal subunit protein bS20 of Vesicomyosocius okutanii subsp. Calyptogena okutanii (strain HA).